The chain runs to 36 residues: Pancreatic polypeptide (36 aa).

The residue at position 36 (Tyr-36) is a Tyrosine amide.

The protein belongs to the NPY family.

It localises to the secreted. In terms of biological role, hormone secreted by pancreatic cells that acts as a regulator of pancreatic and gastrointestinal functions probably by signaling through the G protein-coupled receptor NPY4R2. This Equus przewalskii (Przewalski's horse) protein is Pancreatic polypeptide (PPY).